The following is a 253-amino-acid chain: Phosphate import ATP-binding protein PstB (253 aa).

Positions 5–248 constitute an ABC transporter domain; it reads IETINLHVYY…PEHELTEKYV (244 aa). 37 to 44 provides a ligand contact to ATP; sequence GPSGCGKS.

The protein belongs to the ABC transporter superfamily. Phosphate importer (TC 3.A.1.7) family. As to quaternary structure, the complex is composed of two ATP-binding proteins (PstB), two transmembrane proteins (PstC and PstA) and a solute-binding protein (PstS).

It localises to the cell membrane. The catalysed reaction is phosphate(out) + ATP + H2O = ADP + 2 phosphate(in) + H(+). Functionally, part of the ABC transporter complex PstSACB involved in phosphate import. Responsible for energy coupling to the transport system. The chain is Phosphate import ATP-binding protein PstB from Pyrococcus furiosus (strain ATCC 43587 / DSM 3638 / JCM 8422 / Vc1).